Consider the following 137-residue polypeptide: Phosphomevalonate dehydratase small subunit (137 aa).

Residue serine 65 is the Proton acceptor of the active site.

It belongs to the AcnX type II small subunit family. As to quaternary structure, heterodimer composed of a large subunit (PMDh-L) and a small subunit (PMDh-S).

It catalyses the reaction (R)-5-phosphomevalonate = (2E)-3-methyl-5-phosphooxypent-2-enoate + H2O. It participates in isoprenoid biosynthesis; isopentenyl diphosphate biosynthesis via mevalonate pathway. Functionally, component of a hydro-lyase that catalyzes the dehydration of mevalonate 5-phosphate (MVA5P) to form trans-anhydromevalonate 5-phosphate (tAHMP). Involved in the archaeal mevalonate (MVA) pathway, which provides fundamental precursors for isoprenoid biosynthesis, such as isopentenyl diphosphate (IPP) and dimethylallyl diphosphate (DMAPP). The chain is Phosphomevalonate dehydratase small subunit from Methanococcoides burtonii (strain DSM 6242 / NBRC 107633 / OCM 468 / ACE-M).